The chain runs to 602 residues: Elongation factor 4 (602 aa).

In terms of domain architecture, tr-type G spans 7–189 (SRIRNFSIIA…SIVQQVPPPA (183 aa)). Residues 19–24 (DHGKST) and 136–139 (NKID) contribute to the GTP site.

The protein belongs to the TRAFAC class translation factor GTPase superfamily. Classic translation factor GTPase family. LepA subfamily.

It is found in the cell inner membrane. It carries out the reaction GTP + H2O = GDP + phosphate + H(+). Functionally, required for accurate and efficient protein synthesis under certain stress conditions. May act as a fidelity factor of the translation reaction, by catalyzing a one-codon backward translocation of tRNAs on improperly translocated ribosomes. Back-translocation proceeds from a post-translocation (POST) complex to a pre-translocation (PRE) complex, thus giving elongation factor G a second chance to translocate the tRNAs correctly. Binds to ribosomes in a GTP-dependent manner. The sequence is that of Elongation factor 4 from Picosynechococcus sp. (strain ATCC 27264 / PCC 7002 / PR-6) (Agmenellum quadruplicatum).